Here is a 124-residue protein sequence, read N- to C-terminus: Large ribosomal subunit protein uL14 (124 aa).

The protein belongs to the universal ribosomal protein uL14 family. As to quaternary structure, part of the 50S ribosomal subunit. Forms a cluster with proteins L3 and L19. In the 70S ribosome, L14 and L19 interact and together make contacts with the 16S rRNA in bridges B5 and B8.

Functionally, binds to 23S rRNA. Forms part of two intersubunit bridges in the 70S ribosome. The sequence is that of Large ribosomal subunit protein uL14 from Mycoplasmoides gallisepticum (strain R(low / passage 15 / clone 2)) (Mycoplasma gallisepticum).